The sequence spans 204 residues: HTH-type transcriptional repressor KstR2 (204 aa).

The HTH tetR-type domain maps to 13–73 (SGRRTELLDI…EILRGFLDDL (61 aa)). A DNA-binding region (H-T-H motif) is located at residues 36–55 (TVRDIADAAGILSGSLYHHF).

As to quaternary structure, homodimer.

Functionally, controls the expression of a small regulon that may play a role in the utilization of cholesterol. This is HTH-type transcriptional repressor KstR2 (kstR2) from Rhodococcus jostii (strain RHA1).